Consider the following 424-residue polypeptide: UDP-sugar transporter protein SLC35A5 (424 aa).

Residues Met-1–His-8 lie on the Cytoplasmic side of the membrane. Residues Pro-9–Leu-29 traverse the membrane as a helical segment. The Lumenal portion of the chain corresponds to Ser-30 to Thr-53. A helical membrane pass occupies residues Ala-54–Ile-74. Over Lys-75 to Asn-93 the chain is Cytoplasmic. The helical transmembrane segment at Phe-94–Ser-116 threads the bilayer. Topologically, residues Tyr-117 to Gln-119 are lumenal. Residues Pro-120–Leu-142 form a helical membrane-spanning segment. At Lys-143–Asn-147 the chain is on the cytoplasmic side. A helical transmembrane segment spans residues Trp-148–Thr-168. Over Lys-169–Arg-228 the chain is Lumenal. An N-linked (GlcNAc...) asparagine glycan is attached at Asn-204. Residues Leu-229–Tyr-249 traverse the membrane as a helical segment. Over Asn-250–Ser-263 the chain is Cytoplasmic. Residues Ile-264–Gly-284 traverse the membrane as a helical segment. The Lumenal segment spans residues Leu-285–Asn-303. The helical transmembrane segment at Ala-304–Leu-324 threads the bilayer. At Lys-325–Met-330 the chain is on the cytoplasmic side. Residues Phe-331–Phe-351 form a helical membrane-spanning segment. Residues Asp-352 to Arg-354 lie on the Lumenal side of the membrane. A helical membrane pass occupies residues Pro-355 to Ala-375. At Ser-376–Phe-424 the chain is on the cytoplasmic side. Ser-394, Ser-416, and Ser-419 each carry phosphoserine. Residues Gly-395–Phe-424 are disordered. Positions Leu-408–Asp-417 are enriched in basic and acidic residues.

It belongs to the nucleotide-sugar transporter family. SLC35A subfamily. In terms of assembly, probably forms homooligomers and heterooligomers with SLC35A1, SLC35A2, SLC35A3 and SLC35A4.

The protein localises to the golgi apparatus membrane. It catalyses the reaction UMP(out) + UDP-alpha-D-glucuronate(in) = UMP(in) + UDP-alpha-D-glucuronate(out). The enzyme catalyses UMP(out) + UDP-N-acetyl-alpha-D-glucosamine(in) = UMP(in) + UDP-N-acetyl-alpha-D-glucosamine(out). The catalysed reaction is UDP-N-acetyl-alpha-D-galactosamine(in) + UMP(out) = UDP-N-acetyl-alpha-D-galactosamine(out) + UMP(in). In terms of biological role, probable UDP-sugar:UMP transmembrane antiporter involved in UDP-alpha-D-glucuronate/UDP-GlcA, UDP-GlcNAc/UDP-N-acetyl-alpha-D-glucosamine and UDP-N-acetyl-alpha-D-galactosamine/UDP-GalNAc transport from the cytosol to the lumen of the Golgi. This is UDP-sugar transporter protein SLC35A5 from Pongo abelii (Sumatran orangutan).